Here is a 478-residue protein sequence, read N- to C-terminus: MQVTETTSEGLKREFQVLLPANELEDRLNTELSNIKGKVQIKGFRPGKVPVAHLRKVYGKSVMADVLQNAVNEANQQIVTDKGLRLALEPQIEFPKDEEQTIIERALDAKGDLAFKVKLEVLPSFELADLSDVSIKKLVLKPSDEEVNETLERMAKDSRSFEPREEGAEAQSGDRVTIDFVGRIDGTEFEGGKGEDVDLELGSNTFIPGFEDQLVGAKVGDSRLVKVAFPADYQAEQLAGKDAEFDVTVKAVAAPGETKIDDELAKRFGMDDLEKLKEAVSKAVGSDYEAQSRRKLKKELLDALDGKYAFDLPPSLVHQEFAAVWAQVEQDLKTRGKTFEDEGTTEEASQAEYRKIAERRVRLGLVLAQVGETADIKVSDDEVNQALFARIRQFPGQEKQVYDFYRNNPQALAELRAPLFEEKVVDHVLGQVQVVEEPVSKEALFAEDDEADAVTGGAATDEKPSESNNEAAADKAAG.

The span at 154 to 167 shows a compositional bias: basic and acidic residues; the sequence is MAKDSRSFEPREEG. Disordered stretches follow at residues 154–173 and 441–478; these read MAKD…AQSG and KEAL…KAAG. Positions 173–258 constitute a PPIase FKBP-type domain; that stretch reads GDRVTIDFVG…VKAVAAPGET (86 aa).

The protein belongs to the FKBP-type PPIase family. Tig subfamily.

Its subcellular location is the cytoplasm. The enzyme catalyses [protein]-peptidylproline (omega=180) = [protein]-peptidylproline (omega=0). Functionally, involved in protein export. Acts as a chaperone by maintaining the newly synthesized protein in an open conformation. Functions as a peptidyl-prolyl cis-trans isomerase. This is Trigger factor from Methylorubrum extorquens (strain CM4 / NCIMB 13688) (Methylobacterium extorquens).